Consider the following 561-residue polypeptide: Asparagine synthetase [glutamine-hydrolyzing] (561 aa).

The For GATase activity role is filled by cysteine 2. A Glutamine amidotransferase type-2 domain is found at 2-191 (CGIWALFGSD…PGHYEVLDLK (190 aa)). Residues 49–53 (RLAVV), 75–77 (NGE), and aspartate 97 each bind L-glutamine. One can recognise an Asparagine synthetase domain in the interval 213–536 (HAACDTVGNL…PGRSSWLPHY (324 aa)). Residues leucine 256, isoleucine 288, and 363–364 (SG) contribute to the ATP site.

It catalyses the reaction L-aspartate + L-glutamine + ATP + H2O = L-asparagine + L-glutamate + AMP + diphosphate + H(+). It functions in the pathway amino-acid biosynthesis; L-asparagine biosynthesis; L-asparagine from L-aspartate (L-Gln route): step 1/1. The protein is Asparagine synthetase [glutamine-hydrolyzing] (ASNS) of Gallus gallus (Chicken).